The primary structure comprises 362 residues: Cobalt-precorrin-5B C(1)-methyltransferase (362 aa).

This sequence belongs to the CbiD family.

The enzyme catalyses Co-precorrin-5B + S-adenosyl-L-methionine = Co-precorrin-6A + S-adenosyl-L-homocysteine. It functions in the pathway cofactor biosynthesis; adenosylcobalamin biosynthesis; cob(II)yrinate a,c-diamide from sirohydrochlorin (anaerobic route): step 6/10. Catalyzes the methylation of C-1 in cobalt-precorrin-5B to form cobalt-precorrin-6A. This chain is Cobalt-precorrin-5B C(1)-methyltransferase, found in Geotalea daltonii (strain DSM 22248 / JCM 15807 / FRC-32) (Geobacter daltonii).